Reading from the N-terminus, the 131-residue chain is Holo-[acyl-carrier-protein] synthase (131 aa).

Mg(2+)-binding residues include D8 and E59.

The protein belongs to the P-Pant transferase superfamily. AcpS family. Mg(2+) is required as a cofactor.

The protein resides in the cytoplasm. The enzyme catalyses apo-[ACP] + CoA = holo-[ACP] + adenosine 3',5'-bisphosphate + H(+). Functionally, transfers the 4'-phosphopantetheine moiety from coenzyme A to a Ser of acyl-carrier-protein. In Rickettsia africae (strain ESF-5), this protein is Holo-[acyl-carrier-protein] synthase.